A 197-amino-acid chain; its full sequence is Imidazoleglycerol-phosphate dehydratase (197 aa).

This sequence belongs to the imidazoleglycerol-phosphate dehydratase family.

The protein resides in the cytoplasm. It carries out the reaction D-erythro-1-(imidazol-4-yl)glycerol 3-phosphate = 3-(imidazol-4-yl)-2-oxopropyl phosphate + H2O. It functions in the pathway amino-acid biosynthesis; L-histidine biosynthesis; L-histidine from 5-phospho-alpha-D-ribose 1-diphosphate: step 6/9. The polypeptide is Imidazoleglycerol-phosphate dehydratase (Syntrophus aciditrophicus (strain SB)).